The following is a 115-amino-acid chain: Ribonuclease P protein component (115 aa).

The protein belongs to the RnpA family. Consists of a catalytic RNA component (M1 or rnpB) and a protein subunit.

It catalyses the reaction Endonucleolytic cleavage of RNA, removing 5'-extranucleotides from tRNA precursor.. Functionally, RNaseP catalyzes the removal of the 5'-leader sequence from pre-tRNA to produce the mature 5'-terminus. It can also cleave other RNA substrates such as 4.5S RNA. The protein component plays an auxiliary but essential role in vivo by binding to the 5'-leader sequence and broadening the substrate specificity of the ribozyme. In Bacillus cereus (strain ATCC 10987 / NRS 248), this protein is Ribonuclease P protein component.